A 345-amino-acid chain; its full sequence is Alpha-N-acetylneuraminide alpha-2,8-sialyltransferase (345 aa).

Residues 1-15 lie on the Cytoplasmic side of the membrane; the sequence is MKLQGSRMWLCPRTR. Residues 16–36 traverse the membrane as a helical; Signal-anchor for type II membrane protein segment; sequence LPVGASALGFLILCWLYVFPG. The Lumenal portion of the chain corresponds to 37-345; it reads YRLPGHKEMV…KKDVSSQKPH (309 aa). Asparagine 59 and asparagine 107 each carry an N-linked (GlcNAc...) asparagine glycan. 2 disulfide bridges follow: cysteine 126/cysteine 275 and cysteine 140/cysteine 335. CMP-N-acetyl-beta-neuraminate contacts are provided by asparagine 131 and asparagine 154. Residues asparagine 154 and 176 to 178 each bind substrate; that span reads NPS. N-linked (GlcNAc...) asparagine glycosylation occurs at asparagine 233. 5 residues coordinate CMP-N-acetyl-beta-neuraminate: serine 262, threonine 263, glycine 264, tryptophan 284, and histidine 298. 262–264 contacts substrate; that stretch reads STG. Histidine 310 acts as the Proton donor/acceptor in catalysis.

It belongs to the glycosyltransferase 29 family.

The protein localises to the golgi apparatus membrane. The catalysed reaction is an N-acetyl-alpha-neuraminyl-(2-&gt;3)-beta-D-galactosyl derivative + CMP-N-acetyl-beta-neuraminate = an N-acetyl-alpha-neuraminyl-(2-&gt;8)-N-acetyl-alpha-neuraminyl-(2-&gt;3)-beta-D-galactosyl derivative + CMP + H(+). It carries out the reaction a ganglioside GM3 (d18:1(4E)) + CMP-N-acetyl-beta-neuraminate = a ganglioside GD3 (d18:1(4E)) + CMP + H(+). The enzyme catalyses a ganglioside GD3 (d18:1(4E)) + CMP-N-acetyl-beta-neuraminate = a ganglioside GT3 (d18:1(4E)) + CMP + H(+). It catalyses the reaction a ganglioside GD1a (d18:1(4E)) + CMP-N-acetyl-beta-neuraminate = a ganglioside GT1a (d18:1(4E)) + CMP + H(+). The catalysed reaction is a ganglioside GT1b (d18:1(4E)) + CMP-N-acetyl-beta-neuraminate = a ganglioside GQ1b (d18:1(4E)) + CMP + H(+). It carries out the reaction a ganglioside GM1b (d18:1(4E)) + CMP-N-acetyl-beta-neuraminate = a ganglioside GD1c (d18:1(4E)) + CMP + H(+). The enzyme catalyses a ganglioside GD3 + CMP-N-acetyl-beta-neuraminate = a ganglioside GT3 + CMP + H(+). It catalyses the reaction [alpha-N-acetylneuraminyl-(2-&gt;8)](n)-alpha-N-acetylneuraminyl-(2-&gt;8)-alpha-N-acetylneuraminyl-(2-&gt;3)-beta-D-galactosyl-(1-&gt;4)-beta-D-glucosyl-(1&lt;-&gt;1)-ceramide + CMP-N-acetyl-beta-neuraminate = [alpha-N-acetylneuraminyl-(2-&gt;8)](n+1)-alpha-N-acetylneuraminyl-(2-&gt;8)-alpha-N-acetylneuraminyl-(2-&gt;3)-beta-D-galactosyl-(1-&gt;4)-beta-D-glucosyl-(1&lt;-&gt;1)-ceramide + CMP + H(+). Its pathway is protein modification; protein glycosylation. It participates in lipid metabolism; sphingolipid metabolism. In terms of biological role, catalyzes the addition of sialic acid in alpha 2,8-linkage to the sialic acid moiety of the ganglioside GM3 to form ganglioside GD3; gangliosides are a subfamily of complex glycosphingolipds that contain one or more residues of sialic acid. Glycosphingolipids are required for convergence extension movements during early development. Can catalyze the addition of a second alpha-2,8- sialic acid to GD3 to form GT3. Can use GM1b, GD1a and GT1b as acceptor substrates to synthesize GD1c, GT1a and GQ1b respectively. This is Alpha-N-acetylneuraminide alpha-2,8-sialyltransferase from Xenopus tropicalis (Western clawed frog).